The following is a 415-amino-acid chain: Serine hydroxymethyltransferase 2 (415 aa).

(6S)-5,6,7,8-tetrahydrofolate is bound by residues Leu122 and 126-128 (GHL). Lys230 is subject to N6-(pyridoxal phosphate)lysine.

It belongs to the SHMT family. Homodimer. Pyridoxal 5'-phosphate is required as a cofactor.

It is found in the cytoplasm. It carries out the reaction (6R)-5,10-methylene-5,6,7,8-tetrahydrofolate + glycine + H2O = (6S)-5,6,7,8-tetrahydrofolate + L-serine. The protein operates within one-carbon metabolism; tetrahydrofolate interconversion. It functions in the pathway amino-acid biosynthesis; glycine biosynthesis; glycine from L-serine: step 1/1. Its function is as follows. Catalyzes the reversible interconversion of serine and glycine with tetrahydrofolate (THF) serving as the one-carbon carrier. This reaction serves as the major source of one-carbon groups required for the biosynthesis of purines, thymidylate, methionine, and other important biomolecules. Also exhibits THF-independent aldolase activity toward beta-hydroxyamino acids, producing glycine and aldehydes, via a retro-aldol mechanism. The sequence is that of Serine hydroxymethyltransferase 2 from Burkholderia lata (strain ATCC 17760 / DSM 23089 / LMG 22485 / NCIMB 9086 / R18194 / 383).